The following is a 135-amino-acid chain: Histone H1, macronuclear (135 aa).

Over residues 1–17 (MPAKTATAVKRTTTTKK) the composition is skewed to low complexity. Residues 1–135 (MPAKTATAVK…GGKKKSAKKN (135 aa)) are disordered. Composition is skewed to basic residues over residues 18 to 54 (SAAK…RRTP) and 62 to 79 (KATK…RSAT). A compositionally biased stretch (low complexity) spans 80–112 (KKTTAAPAAAAAPATDAPAAAATPSKATGSAKK). Residues 113-135 (ASARKSSAKKPAKGGKKKSAKKN) show a composition bias toward basic residues.

Its subcellular location is the nucleus. It localises to the chromosome. Functionally, histones H1 are necessary for the condensation of nucleosome chains into higher-order structures. This is Histone H1, macronuclear from Euplotes eurystomus (Ciliate).